Consider the following 414-residue polypeptide: BICD family-like cargo adapter 2 (414 aa).

Positions 34-341 form a coiled coil; it reads GQALLEKNEE…DALNQQLLNT (308 aa). Basic and acidic residues predominate over residues 372-384; it reads QEKEKENNKERTG. The tract at residues 372–399 is disordered; the sequence is QEKEKENNKERTGFQRGTRTTKSLRLRG.

The sequence is that of BICD family-like cargo adapter 2 (bicdl2) from Danio rerio (Zebrafish).